Reading from the N-terminus, the 206-residue chain is dITP/XTP pyrophosphatase (206 aa).

7–12 serves as a coordination point for substrate; sequence SNNAKK. The active-site Proton acceptor is aspartate 72. Residue aspartate 72 coordinates Mg(2+). Residues serine 73, 155-158, lysine 182, and 187-188 each bind substrate; these read FGYD and HR.

It belongs to the HAM1 NTPase family. In terms of assembly, homodimer. Mg(2+) serves as cofactor.

The enzyme catalyses XTP + H2O = XMP + diphosphate + H(+). It catalyses the reaction dITP + H2O = dIMP + diphosphate + H(+). The catalysed reaction is ITP + H2O = IMP + diphosphate + H(+). Functionally, pyrophosphatase that catalyzes the hydrolysis of nucleoside triphosphates to their monophosphate derivatives, with a high preference for the non-canonical purine nucleotides XTP (xanthosine triphosphate), dITP (deoxyinosine triphosphate) and ITP. Seems to function as a house-cleaning enzyme that removes non-canonical purine nucleotides from the nucleotide pool, thus preventing their incorporation into DNA/RNA and avoiding chromosomal lesions. The sequence is that of dITP/XTP pyrophosphatase from Corynebacterium glutamicum (strain ATCC 13032 / DSM 20300 / JCM 1318 / BCRC 11384 / CCUG 27702 / LMG 3730 / NBRC 12168 / NCIMB 10025 / NRRL B-2784 / 534).